We begin with the raw amino-acid sequence, 543 residues long: Limonene hydroxylase (543 aa).

A Sigma-54 factor interaction domain is found at 232-464 (VVTYNPSFEK…LRNVIERAFL (233 aa)). Residues 260-267 (GETGSGKE) and 324-333 (ADGGTLFLDE) each bind ATP.

It catalyses the reaction (4S)-limonene + reduced [NADPH--hemoprotein reductase] + O2 = (1S,5R)-carveol + oxidized [NADPH--hemoprotein reductase] + H2O + H(+). The catalysed reaction is (4S)-limonene + reduced [NADPH--hemoprotein reductase] + O2 = (4S)-perillyl alcohol + oxidized [NADPH--hemoprotein reductase] + H2O + H(+). The enzyme catalyses perillyl alcohol + NAD(+) = perillyl aldehyde + NADH + H(+). It carries out the reaction (1S,5R)-carveol + NADP(+) = (R)-carvone + NADPH + H(+). Involved in limonene hydroxylation to a mixture of carveol and perillyl alcohol as well as in dehydrogenation of these products to carvone and perillyl aldehyde. Aromatic alcohols containing an isopropyl or isopropenyl group at ring position 4 also served as substrates for the dehydrogenase activity. The sequence is that of Limonene hydroxylase from Geobacillus stearothermophilus (Bacillus stearothermophilus).